A 267-amino-acid polypeptide reads, in one-letter code: Cysteine protease avirulence protein AvrPphB (267 aa).

Gly-63 is lipidated: N-myristoyl glycine; by host. Catalysis depends on residues Cys-98, His-212, and Asp-227.

The protein belongs to the peptidase C58 family. In terms of assembly, in infected plant cells, the 28 kDa product interacts with PBS1. In terms of processing, autocleaved. This function is essential for myristoylation in infected plant cell and for eliciting the plant hypersensitive response. Myristoylation of 28 kDa product in infected plant cells; it mediates the localization to membranes.

It localises to the secreted. Its subcellular location is the host membrane. Its function is as follows. Cysteine protease avirulence protein, which is essential during infection of plant cells from cultivar-specific of beans and Arabidopsis thaliana. The autocleavage of the protein is required for virulence function. May act by affecting the plant defense system. In plants lacking R3 or RPS5 resistance genes, it probably impairs the plant defense system and leads to the bacteria multiplication. In contrast, in plants containing the R3 or RPS5 protein, it is unable to induce disease symptoms, explaining its avirulence name. The 7 kDa product is required for the type-III translocation from Pseudomonas strains to the plant, but are partially dispensable for effector recognition following in planta expression. In infected plants, it acts by cleaving the PBS1 protein, which leads to resistance or disease, depending on the presence or absence of RPS5, respectively. Targets the Arabidopsis kinases PBS1, BIK1, PBL1, PBL2, PBL3, PBL5, PBL7, PBL9 and PBL11 for cleavage in vitro. Can block recognition of AvrB avirulence factor by plant cells by cleaving Arabidopsis RIPK kinase and suppressing Arabidopsis RPM1 activation. Cannot block AvrRpm1-induced activation of RPM1. This Pseudomonas savastanoi pv. phaseolicola (Pseudomonas syringae pv. phaseolicola) protein is Cysteine protease avirulence protein AvrPphB (avrPph3).